We begin with the raw amino-acid sequence, 239 residues long: Eukaryotic translation initiation factor 6 (239 aa).

The protein belongs to the eIF-6 family. Monomer. Associates with the 60S ribosomal subunit.

Its subcellular location is the cytoplasm. The protein localises to the nucleus. It localises to the nucleolus. Its function is as follows. Binds to the 60S ribosomal subunit and prevents its association with the 40S ribosomal subunit to form the 80S initiation complex in the cytoplasm. May also be involved in ribosome biogenesis. This Entamoeba dispar (strain ATCC PRA-260 / SAW760) protein is Eukaryotic translation initiation factor 6.